Reading from the N-terminus, the 711-residue chain is Double-stranded RNA-specific editase 1 (711 aa).

The interval 1-79 (MDIEDEENMS…RRKTPGPVLP (79 aa)) is disordered. Basic residues predominate over residues 63-73 (SKYRLKKRRKT). Residues 78–144 (LPKNALMQLN…AEKALRSFVQ (67 aa)) form the DRBM 1 domain. Interaction with substrate RNA regions lie at residues 83–88 (LMQLNE) and 104–105 (VH). The residue at position 149 (serine 149) is a Phosphoserine. The tract at residues 176–220 (LFNGFETPDKSEPPFYVGSNGDDSFSSSGDVSLSASPVPASLTQP) is disordered. Low complexity predominate over residues 192–213 (VGSNGDDSFSSSGDVSLSASPV). The region spanning 231-298 (PSGKNPVMIL…AQSALATVFN (68 aa)) is the DRBM 2 domain. 2 interaction with substrate RNA regions span residues 237-242 (VMILNE) and histidine 259. The A to I editase domain occupies 370–707 (SVSTGTKCIN…VEKPTEQDQF (338 aa)). Histidine 394 lines the Zn(2+) pocket. The Proton donor role is filled by glutamate 396. The 1D-myo-inositol hexakisphosphate site is built by arginine 400 and arginine 401. Zn(2+) contacts are provided by cysteine 451 and cysteine 526. Residues lysine 529, arginine 532, lysine 639, lysine 672, lysine 682, and lysine 700 each contribute to the 1D-myo-inositol hexakisphosphate site.

As to quaternary structure, homodimer. Homodimerization is essential for its catalytic activity. Can form heterodimers with isoform 5 of ADAR/ADAR1. Requires 1D-myo-inositol hexakisphosphate as cofactor. Brain and peripheral tissues.

The protein localises to the nucleus. Its subcellular location is the nucleolus. It carries out the reaction adenosine in double-stranded RNA + H2O + H(+) = inosine in double-stranded RNA + NH4(+). In terms of biological role, catalyzes the hydrolytic deamination of adenosine to inosine in double-stranded RNA (dsRNA) referred to as A-to-I RNA editing. This may affect gene expression and function in a number of ways that include mRNA translation by changing codons and hence the amino acid sequence of proteins; pre-mRNA splicing by altering splice site recognition sequences; RNA stability by changing sequences involved in nuclease recognition; genetic stability in the case of RNA virus genomes by changing sequences during viral RNA replication; and RNA structure-dependent activities such as microRNA production or targeting or protein-RNA interactions. Can edit both viral and cellular RNAs and can edit RNAs at multiple sites (hyper-editing) or at specific sites (site-specific editing). Its cellular RNA substrates include: bladder cancer-associated protein (BLCAP), neurotransmitter receptors for glutamate (GRIA2 and GRIK2) and serotonin (HTR2C), GABA receptor (GABRA3) and potassium voltage-gated channel (KCNA1). Site-specific RNA editing of transcripts encoding these proteins results in amino acid substitutions which consequently alter their functional activities. Edits GRIA2 at both the Q/R and R/G sites efficiently but converts the adenosine in hotspot1 much less efficiently. Can inhibit cell proliferation and migration and can stimulate exocytosis. In Rattus norvegicus (Rat), this protein is Double-stranded RNA-specific editase 1 (Adarb1).